The sequence spans 308 residues: 1D-myo-inositol 2-acetamido-2-deoxy-alpha-D-glucopyranoside deacetylase (308 aa).

3 residues coordinate Zn(2+): H37, D40, and H171.

Belongs to the MshB deacetylase family. Zn(2+) is required as a cofactor.

The catalysed reaction is 1D-myo-inositol 2-acetamido-2-deoxy-alpha-D-glucopyranoside + H2O = 1D-myo-inositol 2-amino-2-deoxy-alpha-D-glucopyranoside + acetate. In terms of biological role, catalyzes the deacetylation of 1D-myo-inositol 2-acetamido-2-deoxy-alpha-D-glucopyranoside (GlcNAc-Ins) in the mycothiol biosynthesis pathway. The chain is 1D-myo-inositol 2-acetamido-2-deoxy-alpha-D-glucopyranoside deacetylase from Mycobacterium sp. (strain KMS).